We begin with the raw amino-acid sequence, 728 residues long: Cellulose synthase-like protein E6 (728 aa).

The next 2 membrane-spanning stretches (helical) occupy residues 21–43 (AVYR…YRAT) and 53–73 (AAWL…VITQ). Catalysis depends on residues aspartate 141 and aspartate 446. The next 5 membrane-spanning stretches (helical) occupy residues 523-543 (LWAA…LGLV), 546-566 (TPLF…VFCV), 646-666 (PEFV…VAGL), 669-689 (IMAG…LIVI), and 707-727 (IPLP…LLPI).

Belongs to the glycosyltransferase 2 family. Plant cellulose synthase-like E subfamily.

Its subcellular location is the golgi apparatus membrane. Thought to be a Golgi-localized beta-glycan synthase that polymerize the backbones of noncellulosic polysaccharides (hemicelluloses) of plant cell wall. This is Cellulose synthase-like protein E6 (CSLE6) from Oryza sativa subsp. japonica (Rice).